We begin with the raw amino-acid sequence, 176 residues long: Small ribosomal subunit protein uS5 (176 aa).

Positions 11–74 (LSEVLVDVNR…QAAKKRMMKV (64 aa)) constitute an S5 DRBM domain.

Belongs to the universal ribosomal protein uS5 family. As to quaternary structure, part of the 30S ribosomal subunit. Contacts proteins S4 and S8.

Its function is as follows. With S4 and S12 plays an important role in translational accuracy. In terms of biological role, located at the back of the 30S subunit body where it stabilizes the conformation of the head with respect to the body. This Rickettsia akari (strain Hartford) protein is Small ribosomal subunit protein uS5.